The chain runs to 370 residues: Anhydro-N-acetylmuramic acid kinase (370 aa).

12–19 contributes to the ATP binding site; that stretch reads GTSLDGVD.

It belongs to the anhydro-N-acetylmuramic acid kinase family.

It catalyses the reaction 1,6-anhydro-N-acetyl-beta-muramate + ATP + H2O = N-acetyl-D-muramate 6-phosphate + ADP + H(+). Its pathway is amino-sugar metabolism; 1,6-anhydro-N-acetylmuramate degradation. The protein operates within cell wall biogenesis; peptidoglycan recycling. Catalyzes the specific phosphorylation of 1,6-anhydro-N-acetylmuramic acid (anhMurNAc) with the simultaneous cleavage of the 1,6-anhydro ring, generating MurNAc-6-P. Is required for the utilization of anhMurNAc either imported from the medium or derived from its own cell wall murein, and thus plays a role in cell wall recycling. The protein is Anhydro-N-acetylmuramic acid kinase of Yersinia pseudotuberculosis serotype O:1b (strain IP 31758).